The following is a 261-amino-acid chain: MIVIKVGGSVVCKDVSKVIQNLPKYADRAIIVHGGGCLVNEMLKRLGIEPKFLTHPGGLTSRYTDLETLKVFVMAMSWINKQIVASLHALGVEALGLTGADLGVVRAKRKEKVLIVDERGRQRVVDGGYVGRVVHIAADRLKPPPLKVLSPIAVSEKGELLNVDGDQLAFDVAKAVGARQLVLLSDVDGLIIGGRVVPHLTAEEAEELVKSEEVRGGMKRKLLMAAEAAKSGIEVVISNGLVENPIDVALNGSGTHIVKNL.

Substrate contacts are provided by residues Gly-35–Gly-36, Arg-62, and Asn-162.

This sequence belongs to the acetylglutamate kinase family. LysZ subfamily.

The protein localises to the cytoplasm. It carries out the reaction [amino-group carrier protein]-C-terminal-N-(1,4-dicarboxybutan-1-yl)-L-glutamine + ATP = [amino-group carrier protein]-C-terminal-N-(1-carboxy-5-phosphooxy-5-oxopentan-1-yl)-L-glutamine + ADP. It catalyses the reaction [amino-group carrier protein]-C-terminal-gamma-(L-glutamyl)-L-glutamate + ATP = [amino-group carrier protein]-C-terminal-gamma-(5-phospho-L-glutamyl)-L-glutamate + ADP. It functions in the pathway amino-acid biosynthesis; L-lysine biosynthesis via AAA pathway; L-lysine from L-alpha-aminoadipate (Thermus route): step 2/5. It participates in amino-acid biosynthesis; L-arginine biosynthesis. In terms of biological role, involved in both the arginine and lysine biosynthetic pathways. Phosphorylates the LysW-bound precursors glutamate (for arginine biosynthesis), respectively alpha-aminoadipate (for lysine biosynthesis). The sequence is that of Putative [LysW]-aminoadipate/[LysW]-glutamate kinase from Pyrobaculum islandicum (strain DSM 4184 / JCM 9189 / GEO3).